The sequence spans 191 residues: Protein GrpE (191 aa).

The disordered stretch occupies residues 1–22 (MKDKHNQEHDHLSQEEPESCEK).

It belongs to the GrpE family. Homodimer.

It localises to the cytoplasm. In terms of biological role, participates actively in the response to hyperosmotic and heat shock by preventing the aggregation of stress-denatured proteins, in association with DnaK and GrpE. It is the nucleotide exchange factor for DnaK and may function as a thermosensor. Unfolded proteins bind initially to DnaJ; upon interaction with the DnaJ-bound protein, DnaK hydrolyzes its bound ATP, resulting in the formation of a stable complex. GrpE releases ADP from DnaK; ATP binding to DnaK triggers the release of the substrate protein, thus completing the reaction cycle. Several rounds of ATP-dependent interactions between DnaJ, DnaK and GrpE are required for fully efficient folding. In Helicobacter pylori (strain Shi470), this protein is Protein GrpE.